A 78-amino-acid polypeptide reads, in one-letter code: Acyl carrier protein (78 aa).

The region spanning 2 to 77 (DELFLRMRAL…DAYEFIKSKV (76 aa)) is the Carrier domain. The residue at position 37 (serine 37) is an O-(pantetheine 4'-phosphoryl)serine.

This sequence belongs to the acyl carrier protein (ACP) family. Post-translationally, 4'-phosphopantetheine is transferred from CoA to a specific serine of apo-ACP by AcpS. This modification is essential for activity because fatty acids are bound in thioester linkage to the sulfhydryl of the prosthetic group.

The protein resides in the cytoplasm. Its pathway is lipid metabolism; fatty acid biosynthesis. Carrier of the growing fatty acid chain in fatty acid biosynthesis. The protein is Acyl carrier protein of Treponema pallidum (strain Nichols).